Consider the following 89-residue polypeptide: Small ribosomal subunit protein uS14 (89 aa).

Belongs to the universal ribosomal protein uS14 family. Part of the 30S ribosomal subunit. Contacts proteins S3 and S10.

In terms of biological role, binds 16S rRNA, required for the assembly of 30S particles and may also be responsible for determining the conformation of the 16S rRNA at the A site. The sequence is that of Small ribosomal subunit protein uS14 from Oenococcus oeni (strain ATCC BAA-331 / PSU-1).